Consider the following 157-residue polypeptide: CASP-like protein 1 (157 aa).

Over 1–13 (MKTEARDGGSEWR) the chain is Cytoplasmic. Residues 14–34 (WVAIFELFLRLAAIVSTSVAV) form a helical membrane-spanning segment. Topologically, residues 35–40 (YAAMGK) are extracellular. The chain crosses the membrane as a helical span at residues 41–61 (IFVVAVNGVACFYLLMSLPVS). At 62 to 82 (IFNIMRPHAYPANRVFLNIMD) the chain is on the cytoplasmic side. A helical membrane pass occupies residues 83–103 (MVMVALVTAGALAAGIVYLVE). At 104 to 121 (KAGNARASWVSVWSQFDS) the chain is on the extracellular side. A helical transmembrane segment spans residues 122–142 (SSCFAVLALILHVLLSGVILY). At 143–157 (KQALNIKFKKLDSVD) the chain is on the cytoplasmic side.

The protein belongs to the Casparian strip membrane proteins (CASP) family. In terms of assembly, homodimer and heterodimers.

The protein resides in the cell membrane. In Picea sitchensis (Sitka spruce), this protein is CASP-like protein 1.